A 455-amino-acid polypeptide reads, in one-letter code: N(6)-adenosine-methyltransferase non-catalytic subunit METTL14 (455 aa).

The interval 21–96 (QQLGAESPDS…QHQEESGPYE (76 aa)) is disordered. Residues 37–51 (SKDEQKEIEETRETC) show a composition bias toward basic and acidic residues. Residues 69 to 82 (EGEDPEEDVEEQKE) show a composition bias toward acidic residues. 2 interaction with METTL3 regions span residues 134–135 (RD) and 236–237 (SG). The segment at 244–253 (RMCLRKWGFR) is positively charged region required for RNA-binding. 2 interaction with METTL3 regions span residues 254–257 (RCED) and 277–286 (KAVFQRTKEH). The segment at 296-297 (RR) is positively charged region required for RNA-binding. The tract at residues 307-311 (NVDID) is interaction with METTL3. Residues 392 to 455 (ERLRPKSPPP…GGPHRGFPPR (64 aa)) are disordered. The span at 407–421 (RGGGAPRGGRGGPAA) shows a compositional bias: gly residues. Residues 423–441 (RGDRGRERNRPNFRGDRGG) are compositionally biased toward basic and acidic residues.

The protein belongs to the MT-A70-like family. In terms of assembly, heterodimer; heterodimerizes with mettl3 to form an antiparallel heterodimer that constitutes an active methyltransferase. Component of the WMM complex, a N6-methyltransferase complex composed of a catalytic subcomplex, named MAC, and of an associated subcomplex, named MACOM. The MAC subcomplex is composed of mettl3 and mettl14.

The protein localises to the nucleus. Functionally, the METTL3-METTL14 heterodimer forms a N6-methyltransferase complex that methylates adenosine residues at the N(6) position of some mRNAs and regulates the circadian clock, differentiation of embryonic stem cells and cortical neurogenesis. In the heterodimer formed with mettl3, mettl14 constitutes the RNA-binding scaffold that recognizes the substrate rather than the catalytic core. N6-methyladenosine (m6A), which takes place at the 5'-[AG]GAC-3' consensus sites of some mRNAs, plays a role in mRNA stability and processing. The chain is N(6)-adenosine-methyltransferase non-catalytic subunit METTL14 (mettl14) from Danio rerio (Zebrafish).